We begin with the raw amino-acid sequence, 188 residues long: Phosphoribosylglycinamide formyltransferase (188 aa).

12 to 14 (GSN) contributes to the N(1)-(5-phospho-beta-D-ribosyl)glycinamide binding site. Residues lysine 66, 91–94 (MRLI), and asparagine 108 each bind (6R)-10-formyltetrahydrofolate. The active-site Proton donor is histidine 110.

The protein belongs to the GART family.

It catalyses the reaction N(1)-(5-phospho-beta-D-ribosyl)glycinamide + (6R)-10-formyltetrahydrofolate = N(2)-formyl-N(1)-(5-phospho-beta-D-ribosyl)glycinamide + (6S)-5,6,7,8-tetrahydrofolate + H(+). It participates in purine metabolism; IMP biosynthesis via de novo pathway; N(2)-formyl-N(1)-(5-phospho-D-ribosyl)glycinamide from N(1)-(5-phospho-D-ribosyl)glycinamide (10-formyl THF route): step 1/1. Its function is as follows. Catalyzes the transfer of a formyl group from 10-formyltetrahydrofolate to 5-phospho-ribosyl-glycinamide (GAR), producing 5-phospho-ribosyl-N-formylglycinamide (FGAR) and tetrahydrofolate. This Staphylococcus aureus (strain MSSA476) protein is Phosphoribosylglycinamide formyltransferase.